Consider the following 862-residue polypeptide: Protein translocase subunit SecA (862 aa).

Residues Gln86, 104–108 (GEGKT), and Asp499 contribute to the ATP site. Zn(2+) is bound by residues Cys848, Cys850, Cys859, and His860.

The protein belongs to the SecA family. In terms of assembly, monomer and homodimer. Part of the essential Sec protein translocation apparatus which comprises SecA, SecYEG and auxiliary proteins SecDF-YajC and YidC. Zn(2+) serves as cofactor.

The protein resides in the cell inner membrane. Its subcellular location is the cytoplasm. The catalysed reaction is ATP + H2O + cellular proteinSide 1 = ADP + phosphate + cellular proteinSide 2.. Functionally, part of the Sec protein translocase complex. Interacts with the SecYEG preprotein conducting channel. Has a central role in coupling the hydrolysis of ATP to the transfer of proteins into and across the cell membrane, serving both as a receptor for the preprotein-SecB complex and as an ATP-driven molecular motor driving the stepwise translocation of polypeptide chains across the membrane. This chain is Protein translocase subunit SecA, found in Ehrlichia chaffeensis (strain ATCC CRL-10679 / Arkansas).